The sequence spans 147 residues: Secreted hemophore CSA2 (147 aa).

The first 20 residues, 1–20 (MKFSTILAIPFAIAFANAAA), serve as a signal peptide directing secretion. Residues 34 to 145 (NPYTIYPPVP…SALDAAATAT (112 aa)) form the CFEM domain. 4 disulfide bridges follow: Cys-62–Cys-102, Cys-66–Cys-97, Cys-76–Cys-83, and Cys-85–Cys-118. Asp-80 provides a ligand contact to heme.

Belongs to the RBT5 family. In terms of assembly, homodimer. The possibility of a transient honotrimer assembly of the holo protein is not ruled out.

The protein localises to the secreted. Secreted heme-binding protein involved in the utilization of iron from human hemoglobin during hyphal growth. May also play a role in non-hemoglobin iron utilization. Heme transfer occurs between PGA7, RBT5 and CSA2 supporting a model in which the 3 CFEM proteins cooperate in a heme-acquisition system and form a cross-cell wall heme-transfer cascade. The ability to acquire iron from host tissues is a major virulence factor of pathogenic microorganisms. The protein is Secreted hemophore CSA2 (CSA2) of Candida albicans (strain SC5314 / ATCC MYA-2876) (Yeast).